Reading from the N-terminus, the 162-residue chain is NADH-quinone oxidoreductase subunit I (162 aa).

4Fe-4S ferredoxin-type domains are found at residues 52–82 and 93–122; these read LRRY…IEAG and TRYD…EGPN. [4Fe-4S] cluster is bound by residues Cys-62, Cys-65, Cys-68, Cys-72, Cys-102, Cys-105, Cys-108, and Cys-112.

It belongs to the complex I 23 kDa subunit family. In terms of assembly, NDH-1 is composed of 14 different subunits. Subunits NuoA, H, J, K, L, M, N constitute the membrane sector of the complex. It depends on [4Fe-4S] cluster as a cofactor.

The protein localises to the cell inner membrane. It catalyses the reaction a quinone + NADH + 5 H(+)(in) = a quinol + NAD(+) + 4 H(+)(out). Its function is as follows. NDH-1 shuttles electrons from NADH, via FMN and iron-sulfur (Fe-S) centers, to quinones in the respiratory chain. The immediate electron acceptor for the enzyme in this species is believed to be ubiquinone. Couples the redox reaction to proton translocation (for every two electrons transferred, four hydrogen ions are translocated across the cytoplasmic membrane), and thus conserves the redox energy in a proton gradient. The sequence is that of NADH-quinone oxidoreductase subunit I from Beijerinckia indica subsp. indica (strain ATCC 9039 / DSM 1715 / NCIMB 8712).